A 314-amino-acid chain; its full sequence is Small ribosomal subunit biogenesis GTPase RsgA (314 aa).

The segment at 1–21 is disordered; the sequence is MKRAPTKQPAKPAARGGERAQ. Residues 85–246 form the CP-type G domain; that stretch reads SDQFKSKLFA…LIDSPGFQEF (162 aa). GTP-binding positions include 134-137 and 188-196; these read NKID and GQSGMGKST. Residues Cys270, Cys275, His277, and Cys283 each contribute to the Zn(2+) site.

Belongs to the TRAFAC class YlqF/YawG GTPase family. RsgA subfamily. Monomer. Associates with 30S ribosomal subunit, binds 16S rRNA. The cofactor is Zn(2+).

It is found in the cytoplasm. In terms of biological role, one of several proteins that assist in the late maturation steps of the functional core of the 30S ribosomal subunit. Helps release RbfA from mature subunits. May play a role in the assembly of ribosomal proteins into the subunit. Circularly permuted GTPase that catalyzes slow GTP hydrolysis, GTPase activity is stimulated by the 30S ribosomal subunit. The sequence is that of Small ribosomal subunit biogenesis GTPase RsgA from Burkholderia mallei (strain ATCC 23344).